A 513-amino-acid chain; its full sequence is Bifunctional purine biosynthesis protein PurH (513 aa).

Residues Met1 to Ile145 enclose the MGS-like domain.

This sequence belongs to the PurH family.

It catalyses the reaction (6R)-10-formyltetrahydrofolate + 5-amino-1-(5-phospho-beta-D-ribosyl)imidazole-4-carboxamide = 5-formamido-1-(5-phospho-D-ribosyl)imidazole-4-carboxamide + (6S)-5,6,7,8-tetrahydrofolate. It carries out the reaction IMP + H2O = 5-formamido-1-(5-phospho-D-ribosyl)imidazole-4-carboxamide. The protein operates within purine metabolism; IMP biosynthesis via de novo pathway; 5-formamido-1-(5-phospho-D-ribosyl)imidazole-4-carboxamide from 5-amino-1-(5-phospho-D-ribosyl)imidazole-4-carboxamide (10-formyl THF route): step 1/1. It functions in the pathway purine metabolism; IMP biosynthesis via de novo pathway; IMP from 5-formamido-1-(5-phospho-D-ribosyl)imidazole-4-carboxamide: step 1/1. The sequence is that of Bifunctional purine biosynthesis protein PurH from Caldicellulosiruptor saccharolyticus (strain ATCC 43494 / DSM 8903 / Tp8T 6331).